A 305-amino-acid polypeptide reads, in one-letter code: UDP-N-acetylenolpyruvoylglucosamine reductase 2 (305 aa).

The FAD-binding PCMH-type domain occupies 33-197 (VGGKADVFVA…LEARFELEEG (165 aa)). Arginine 176 is a catalytic residue. Serine 226 acts as the Proton donor in catalysis. The active site involves glutamate 296.

This sequence belongs to the MurB family. FAD serves as cofactor.

It is found in the cytoplasm. It catalyses the reaction UDP-N-acetyl-alpha-D-muramate + NADP(+) = UDP-N-acetyl-3-O-(1-carboxyvinyl)-alpha-D-glucosamine + NADPH + H(+). Its pathway is cell wall biogenesis; peptidoglycan biosynthesis. Functionally, cell wall formation. The chain is UDP-N-acetylenolpyruvoylglucosamine reductase 2 (murB2) from Bacillus anthracis.